The chain runs to 216 residues: Uracil phosphoribosyltransferase (216 aa).

Residues R85, R110, and 135-143 (DPMVATGYS) contribute to the 5-phospho-alpha-D-ribose 1-diphosphate site. Residues I200 and 205–207 (GDA) each bind uracil. Residue D206 participates in 5-phospho-alpha-D-ribose 1-diphosphate binding.

Belongs to the UPRTase family. Mg(2+) is required as a cofactor.

The enzyme catalyses UMP + diphosphate = 5-phospho-alpha-D-ribose 1-diphosphate + uracil. The protein operates within pyrimidine metabolism; UMP biosynthesis via salvage pathway; UMP from uracil: step 1/1. Its activity is regulated as follows. Allosterically activated by GTP. Catalyzes the conversion of uracil and 5-phospho-alpha-D-ribose 1-diphosphate (PRPP) to UMP and diphosphate. This is Uracil phosphoribosyltransferase from Burkholderia cenocepacia (strain ATCC BAA-245 / DSM 16553 / LMG 16656 / NCTC 13227 / J2315 / CF5610) (Burkholderia cepacia (strain J2315)).